A 308-amino-acid polypeptide reads, in one-letter code: Aspartate carbamoyltransferase catalytic subunit (308 aa).

2 residues coordinate carbamoyl phosphate: Arg-51 and Thr-52. Lys-79 contacts L-aspartate. Carbamoyl phosphate contacts are provided by Arg-101, His-130, and Gln-133. Positions 163 and 215 each coordinate L-aspartate. Carbamoyl phosphate is bound by residues Ala-258 and Pro-259.

This sequence belongs to the aspartate/ornithine carbamoyltransferase superfamily. ATCase family. As to quaternary structure, heterododecamer (2C3:3R2) of six catalytic PyrB chains organized as two trimers (C3), and six regulatory PyrI chains organized as three dimers (R2).

The enzyme catalyses carbamoyl phosphate + L-aspartate = N-carbamoyl-L-aspartate + phosphate + H(+). It functions in the pathway pyrimidine metabolism; UMP biosynthesis via de novo pathway; (S)-dihydroorotate from bicarbonate: step 2/3. Its function is as follows. Catalyzes the condensation of carbamoyl phosphate and aspartate to form carbamoyl aspartate and inorganic phosphate, the committed step in the de novo pyrimidine nucleotide biosynthesis pathway. This is Aspartate carbamoyltransferase catalytic subunit from Pediococcus pentosaceus (strain ATCC 25745 / CCUG 21536 / LMG 10740 / 183-1w).